A 67-amino-acid polypeptide reads, in one-letter code: U-myrmeciitoxin(01)-Mg4a (67 aa).

The first 25 residues, 1-25 (MGKVFFFVLMIAIIGSTFLIEEALG), serve as a signal peptide directing secretion.

The protein belongs to the ant myrmeciitoxin-01 family. As to quaternary structure, homodimer; disulfide-linked. In terms of processing, contains 2 intrachain disulfide bonds (one per chain) and 1 interchain disulfide bond. Expressed by the venom gland.

It localises to the secreted. This chain is U-myrmeciitoxin(01)-Mg4a, found in Myrmecia gulosa (Red bulldog ant).